Consider the following 186-residue polypeptide: Cytochrome b6-f complex iron-sulfur subunit (186 aa).

Residues 16-38 (LLSFVTGGAIAATTAATLYPVVL) form a helical membrane-spanning segment. The Rieske domain maps to 74–163 (GEPVLTLGLD…ATVSDDKVLI (90 aa)). Residues cysteine 109, histidine 111, cysteine 127, and histidine 130 each contribute to the [2Fe-2S] cluster site. Residues cysteine 114 and cysteine 129 are joined by a disulfide bond.

Belongs to the Rieske iron-sulfur protein family. The 4 large subunits of the cytochrome b6-f complex are cytochrome b6, subunit IV (17 kDa polypeptide, PetD), cytochrome f and the Rieske protein, while the 4 small subunits are PetG, PetL, PetM and PetN. The complex functions as a dimer. [2Fe-2S] cluster serves as cofactor.

It localises to the cell inner membrane. It carries out the reaction 2 oxidized [plastocyanin] + a plastoquinol + 2 H(+)(in) = 2 reduced [plastocyanin] + a plastoquinone + 4 H(+)(out). In terms of biological role, component of the cytochrome b6-f complex, which mediates electron transfer between photosystem II (PSII) and photosystem I (PSI), cyclic electron flow around PSI, and state transitions. In Gloeobacter violaceus (strain ATCC 29082 / PCC 7421), this protein is Cytochrome b6-f complex iron-sulfur subunit.